Consider the following 223-residue polypeptide: All-trans retinoic acid-induced differentiation factor (223 aa).

The N-terminal stretch at 1–25 is a signal peptide; it reads MASRESGGSRAAALLLVLGVERALA. At 26–193 the chain is on the extracellular side; the sequence is LPEICTLCPG…YKCMRQGSFS (168 aa). Positions 146–187 constitute an EGF-like domain; sequence QRDLCNSTGSPEMCPENGSCASDGPGLLQCVCADGFHGYKCM. 3 cysteine pairs are disulfide-bonded: C150-C165, C159-C175, and C177-C186. Residues 194–214 traverse the membrane as a helical segment; that stretch reads LLMFFGILGSTTLAISILLWG. Over 215–223 the chain is Cytoplasmic; that stretch reads TQRRKAKAS.

Interacts with NELL1; the interaction promotes osteoblastic differentiation and mineralization. Interacts with SLC37A3; the interaction is direct and both proteins are mutually dependent for their stability.

The protein localises to the nucleus envelope. Its subcellular location is the cell membrane. The protein resides in the lysosome membrane. Its function is as follows. Promotes osteoblast cell differentiation and terminal mineralization. Plays a role in inducing the cell cycle arrest via inhibiting CCND1 expression in all-trans-retinoic acid (ATRA) signal pathway. In osteoclasts, forms a transporter complex with ATRAID for nitrogen-containing-bisphophonates (N-BPs) required for releasing N-BP molecules that have trafficked to lysosomes through fluid-phase endocytosis into the cytosol. This is All-trans retinoic acid-induced differentiation factor (Atraid) from Mus musculus (Mouse).